Reading from the N-terminus, the 194-residue chain is Crossover junction endodeoxyribonuclease RuvC (194 aa).

Active-site residues include aspartate 7, glutamate 68, and aspartate 141. Residues aspartate 7, glutamate 68, and aspartate 141 each contribute to the Mg(2+) site.

This sequence belongs to the RuvC family. In terms of assembly, homodimer which binds Holliday junction (HJ) DNA. The HJ becomes 2-fold symmetrical on binding to RuvC with unstacked arms; it has a different conformation from HJ DNA in complex with RuvA. In the full resolvosome a probable DNA-RuvA(4)-RuvB(12)-RuvC(2) complex forms which resolves the HJ. The cofactor is Mg(2+).

The protein localises to the cytoplasm. The catalysed reaction is Endonucleolytic cleavage at a junction such as a reciprocal single-stranded crossover between two homologous DNA duplexes (Holliday junction).. The RuvA-RuvB-RuvC complex processes Holliday junction (HJ) DNA during genetic recombination and DNA repair. Endonuclease that resolves HJ intermediates. Cleaves cruciform DNA by making single-stranded nicks across the HJ at symmetrical positions within the homologous arms, yielding a 5'-phosphate and a 3'-hydroxyl group; requires a central core of homology in the junction. The consensus cleavage sequence is 5'-(A/T)TT(C/G)-3'. Cleavage occurs on the 3'-side of the TT dinucleotide at the point of strand exchange. HJ branch migration catalyzed by RuvA-RuvB allows RuvC to scan DNA until it finds its consensus sequence, where it cleaves and resolves the cruciform DNA. In Mycolicibacterium vanbaalenii (strain DSM 7251 / JCM 13017 / BCRC 16820 / KCTC 9966 / NRRL B-24157 / PYR-1) (Mycobacterium vanbaalenii), this protein is Crossover junction endodeoxyribonuclease RuvC.